The chain runs to 236 residues: 1-(5-phosphoribosyl)-5-[(5-phosphoribosylamino)methylideneamino] imidazole-4-carboxamide isomerase (236 aa).

Catalysis depends on Asp8, which acts as the Proton acceptor. The active-site Proton donor is Asp127.

Belongs to the HisA/HisF family.

The protein resides in the cytoplasm. The catalysed reaction is 1-(5-phospho-beta-D-ribosyl)-5-[(5-phospho-beta-D-ribosylamino)methylideneamino]imidazole-4-carboxamide = 5-[(5-phospho-1-deoxy-D-ribulos-1-ylimino)methylamino]-1-(5-phospho-beta-D-ribosyl)imidazole-4-carboxamide. Its pathway is amino-acid biosynthesis; L-histidine biosynthesis; L-histidine from 5-phospho-alpha-D-ribose 1-diphosphate: step 4/9. The sequence is that of 1-(5-phosphoribosyl)-5-[(5-phosphoribosylamino)methylideneamino] imidazole-4-carboxamide isomerase from Sulfurimonas denitrificans (strain ATCC 33889 / DSM 1251) (Thiomicrospira denitrificans (strain ATCC 33889 / DSM 1251)).